A 208-amino-acid chain; its full sequence is Small ribosomal subunit protein uS4 (208 aa).

Positions Lys30–Ser51 are disordered. An S4 RNA-binding domain is found at Arg98–Ile161.

It belongs to the universal ribosomal protein uS4 family. As to quaternary structure, part of the 30S ribosomal subunit. Contacts protein S5. The interaction surface between S4 and S5 is involved in control of translational fidelity.

Its function is as follows. One of the primary rRNA binding proteins, it binds directly to 16S rRNA where it nucleates assembly of the body of the 30S subunit. In terms of biological role, with S5 and S12 plays an important role in translational accuracy. The polypeptide is Small ribosomal subunit protein uS4 (Wolinella succinogenes (strain ATCC 29543 / DSM 1740 / CCUG 13145 / JCM 31913 / LMG 7466 / NCTC 11488 / FDC 602W) (Vibrio succinogenes)).